Reading from the N-terminus, the 334-residue chain is Phosphate acyltransferase (334 aa).

The protein belongs to the PlsX family. As to quaternary structure, homodimer. Probably interacts with PlsY.

The protein resides in the cytoplasm. The catalysed reaction is a fatty acyl-[ACP] + phosphate = an acyl phosphate + holo-[ACP]. Its pathway is lipid metabolism; phospholipid metabolism. Its function is as follows. Catalyzes the reversible formation of acyl-phosphate (acyl-PO(4)) from acyl-[acyl-carrier-protein] (acyl-ACP). This enzyme utilizes acyl-ACP as fatty acyl donor, but not acyl-CoA. In Desulfitobacterium hafniense (strain DSM 10664 / DCB-2), this protein is Phosphate acyltransferase.